A 352-amino-acid polypeptide reads, in one-letter code: Maleylacetate reductase (352 aa).

Belongs to the iron-containing alcohol dehydrogenase family.

The enzyme catalyses 3-oxoadipate + NAD(+) = maleylacetate + NADH + H(+). It carries out the reaction 3-oxoadipate + NADP(+) = maleylacetate + NADPH + H(+). It participates in aromatic compound metabolism; 3-chlorocatechol degradation. In Pseudomonas knackmussii (strain DSM 6978 / CCUG 54928 / LMG 23759 / B13), this protein is Maleylacetate reductase (clcE).